Consider the following 676-residue polypeptide: Electrogenic aspartate/glutamate antiporter SLC25A12, mitochondrial (676 aa).

N-acetylalanine is present on Ala-2. The interval Ala-2–Pro-293 is regulatory N-terminal domain. The Mitochondrial intermembrane segment spans residues Ala-2–Arg-328. Positions 65, 67, 69, 71, and 76 each coordinate Ca(2+). 4 EF-hand domains span residues Asp-65–Glu-76, Ala-86–His-121, Pro-125–Gln-155, and Leu-157–His-192. Residues Leu-294–Gln-309 form a linker loop domain region. Positions Trp-319–Leu-611 are carrier domain. 3 Solcar repeats span residues Ala-323–Lys-415, Ile-423–Leu-507, and Val-515–Trp-603. Residues Phe-329–Ile-346 form a helical membrane-spanning segment. Over Asp-347–Arg-389 the chain is Mitochondrial matrix. A helical transmembrane segment spans residues Gly-390–Asn-409. Residues Asp-410–Gly-432 lie on the Mitochondrial intermembrane side of the membrane. The chain crosses the membrane as a helical span at residues Gly-433 to Leu-446. The Mitochondrial matrix portion of the chain corresponds to Glu-447–Lys-481. A helical transmembrane segment spans residues Gly-482 to Tyr-501. Residues Ala-502–Leu-520 are Mitochondrial intermembrane-facing. A helical transmembrane segment spans residues Leu-521 to Ala-538. The Mitochondrial matrix portion of the chain corresponds to Asp-539 to Lys-577. Residues Gly-578–Tyr-597 traverse the membrane as a helical segment. Residues Glu-598–Gln-676 lie on the Mitochondrial intermembrane side of the membrane. The tract at residues Lys-612–Ala-674 is C-terminal domain.

This sequence belongs to the mitochondrial carrier (TC 2.A.29) family. As to quaternary structure, homodimer (via N-terminus).

It localises to the mitochondrion inner membrane. It carries out the reaction L-aspartate(in) + L-glutamate(out) + H(+)(out) = L-aspartate(out) + L-glutamate(in) + H(+)(in). The enzyme catalyses 3-sulfino-L-alanine(out) + L-glutamate(in) + H(+)(in) = 3-sulfino-L-alanine(in) + L-glutamate(out) + H(+)(out). It catalyses the reaction 3-sulfino-L-alanine(out) + L-aspartate(in) = 3-sulfino-L-alanine(in) + L-aspartate(out). L-aspartate and 3-sulfino-L-alanine uptake are both inhibited by glisoxepide. In terms of biological role, mitochondrial electrogenic aspartate/glutamate antiporter that favors efflux of aspartate and entry of glutamate and proton within the mitochondria as part of the malate-aspartate shuttle. Also mediates the uptake of L-cysteinesulfinate (3-sulfino-L-alanine) by mitochondria in exchange of L-glutamate and proton. Can also exchange L-cysteinesulfinate with aspartate in their anionic form without any proton translocation. Lacks transport activity towards L-glutamine or gamma-aminobutyric acid (GABA). The protein is Electrogenic aspartate/glutamate antiporter SLC25A12, mitochondrial of Rattus norvegicus (Rat).